An 849-amino-acid polypeptide reads, in one-letter code: MAVEKLSPGMQQYLDIKKDYPDAFLLFRMGDFYELFYDDAVNAAQILEISLTSRNKNAENPIPMAGVPYHSAQQYIDVLVESGYKVAIAEQMEDPKEAKGVVKREVVQVITPGTVVDSSKPDSANNFLVALDYSDGLYGLAYMDLVTGEFQVTSLEDFALVCGEIRNLKAREVVLGYALPEAEEQVLAGQMNLLLSYVQTALDDVQLLGEELSPMERQAAGKLLEYVHRTQMRELSHLKKAQHYEIKDFLQMDYATKASLDLTENARSGKKHGSLYWLMDETKTAMGGRMLRSWIQRPLIDEARISQRQNVVEVFLDHFFERSDLTESLKGVYDIERLASRVSFGKTNPKELLQLAATLGNVPQIKAILQGIGSPHLARLIEGLDPIPELAGLISSAISPDAPHIITEGNIIQTGFDETLDQYRLVLREGTGWIAELEVKERANSGISNLKIDYNKKDGYYFHVTNSQLAHVPSHFFRKATLKNSERFGTEELARIEGEMLEAREKSANLEYEIFMRIREEAGKYIQRLQALAQTLAAVDVLQSFAAVAEQQHLVRPVFTAERRLQIEKGRHAVVEKVMGAQSYIPNSILLDQETDIQLITGPNMSGKSTYMRQLAIIVIMAQMGSYVPAQSASLPLFDAIFTRIGAADDLVSGQSTFMVEMMEANRAIRQASERSLILFDELGRGTATYDGMALAQAIIEHIHHYTGAKTLFATHYHELTALEESLEHLENVHVATLEKDGQVTFLHKIEPGPADKSYGIHVAKIAGLPEKLLERADSILSHLESQDTGLGSELPTASRPKQSQVAEQMSLFAEGTENPVLTELRDLDIYNMTPLEVMAAVAELKKKL.

Residue 602–609 (GPNMSGKS) participates in ATP binding.

This sequence belongs to the DNA mismatch repair MutS family.

This protein is involved in the repair of mismatches in DNA. It is possible that it carries out the mismatch recognition step. This protein has a weak ATPase activity. This chain is DNA mismatch repair protein MutS, found in Streptococcus sanguinis (strain SK36).